Reading from the N-terminus, the 557-residue chain is TWiK family of potassium channels protein 7 (557 aa).

Disordered stretches follow at residues 1–34 (MTSS…EALL) and 128–151 (DKSG…EEEE). Over 1–165 (MTSSSRGYQR…RKFAKLVLPH (165 aa)) the chain is Cytoplasmic. Residues 134 to 151 (DIDDESDDESKDEDEEEE) show a composition bias toward acidic residues. Residues 166-186 (VALVLLTCTYTVIGALIFYSV) form a helical membrane-spanning segment. Residues Asn220 and Asn237 are each glycosylated (N-linked (GlcNAc...) asparagine). The pore-forming intramembrane region spans 270-290 (SIFFAVTVVTTIGYGNPVPVT). Residues 295–315 (IWCILFSLLGIPLTLVTIADL) traverse the membrane as a helical segment. Residues 316-368 (GKFLSEHLVWLYGNYLKLKYLILSRHRKERREHVCEHCHSHGMGHDMNIEEKR) lie on the Cytoplasmic side of the membrane. A helical membrane pass occupies residues 369-389 (IPAFLVLAILIVYTAFGGVLM). The segment at residues 397-417 (FFTSFYWSFITMTTVGFGDLM) is an intramembrane region (pore-forming). A helical membrane pass occupies residues 426 to 446 (IILLYIILGLAITTMCIDLVG). At 447–557 (VQYIRKIHYF…SRYSLNRAFK (111 aa)) the chain is on the cytoplasmic side.

The protein belongs to the two pore domain potassium channel (TC 1.A.1.8) family.

It is found in the membrane. The protein is TWiK family of potassium channels protein 7 (twk-7) of Caenorhabditis elegans.